Here is a 109-residue protein sequence, read N- to C-terminus: uncharacterized protein (109 aa).

The helical transmembrane segment at 29–49 threads the bilayer; the sequence is ITIIITLVIIFIIFTLIILYF.

It localises to the membrane. This is an uncharacterized protein from Sputnik virophage.